Reading from the N-terminus, the 493-residue chain is Aminotransferase swnA (493 aa).

This sequence belongs to the class-I pyridoxal-phosphate-dependent aminotransferase family. Requires pyridoxal 5'-phosphate as cofactor.

It participates in mycotoxin biosynthesis. Its function is as follows. Aminotransferase; part of the gene cluster that mediates the biosynthesis of swainsonine (SW), a cytotoxic fungal alkaloid and a potential cancer therapy drug. Swainsonine production occurs via a multibranched pathway and is dispensable for fungal colonization of plants and infection of insect hosts. The first step of swainsonine biosynthesis is the production of the precursor pipecolic acid (PA) via conversion of L-lysine (Lys) to 1-piperideine-6-carboxylate (P6C) by the aminotransferase swnA, the latter being further reduced to PA by the reductase swnR. The PKS-NRPS hybrid synthetase swnK uptakes and condensates PA and malonyl-CoA with and without skipping of the ketoreductase (KR) domain in order to produce 3 intermediates, 1-oxoindolizidine, (1S)-1-hydroxyindolizin, and (1R)-1-hydroxyindolizine; with the transisomer (1S)-1-hydroxyindolizin being predominant. The terminal thioester reductase (TE) domain of swnK is involved in reduction of the thioester bond to release the intermediate aldehydes. The oxidoreductase swnN could contribute to the reduction of 1-oxoindolizidine to (1S)-1-hydroxyindolizin and (1R)-1-hydroxyindolizine, contributing to the major route of SW production. The dioxygenase swnH2 would be responsible for the oxidization of (1R)-1-hydroxyindolizine into (1R,2S)-1,2-dihydroxyindolizine and of (1S)-1-hydroxyindolizin to yield both (1R,2S)-1,2-dihydroxyindolizine and (1S,2S)-1,2-dihydroxyindolizine. The dioxygenase swnH1 then performs the conversion of the 1,2-dihydroxyindolizine epimers to SW. The sequence is that of Aminotransferase swnA from Arthroderma benhamiae (strain ATCC MYA-4681 / CBS 112371) (Trichophyton mentagrophytes).